A 512-amino-acid chain; its full sequence is Podocan-like protein 1 (512 aa).

Residues 1–26 form the signal peptide; sequence MAESGLAMWPSLLLLLLLPGPPPVAG. The region spanning 37-74 is the LRRNT domain; the sequence is ESLQPLPRACPLRCSCPRVDTVDCDGLDLRVFPDNITR. An N-linked (GlcNAc...) asparagine glycan is attached at Asn71. LRR repeat units follow at residues 75–96, 99–119, 125–146, 147–167, 170–193, 196–216, 217–238, 241–261, 267–288, 289–309, 312–332, 338–359, 360–380, 383–396, 409–430, 431–451, and 454–474; these read AAQH…ELSR, GLRT…PDEA, QLQH…LPRS, LRVA…TFGE, ALRS…AFRG, AIAT…SLPP, SLER…ALSR, QLRE…DATT, SLEY…LPRT, LAIL…RLHG, GLRY…PAGA, GLHT…LPRR, LRAL…DLVA, GLTE…RLAS, ALRS…LPTG, LRTL…PLAG, and QLRE…GPGT.

The protein belongs to the small leucine-rich proteoglycan (SLRP) family. SLRP class V subfamily. N-glycosylated.

It localises to the secreted. Its subcellular location is the extracellular space. It is found in the extracellular matrix. The polypeptide is Podocan-like protein 1 (PODNL1) (Homo sapiens (Human)).